A 123-amino-acid chain; its full sequence is Large ribosomal subunit protein uL14 (123 aa).

The protein belongs to the universal ribosomal protein uL14 family. In terms of assembly, part of the 50S ribosomal subunit. Forms a cluster with proteins L3 and L19. In the 70S ribosome, L14 and L19 interact and together make contacts with the 16S rRNA in bridges B5 and B8.

Binds to 23S rRNA. Forms part of two intersubunit bridges in the 70S ribosome. The sequence is that of Large ribosomal subunit protein uL14 from Aliivibrio fischeri (strain ATCC 700601 / ES114) (Vibrio fischeri).